A 319-amino-acid chain; its full sequence is Ciliary microtubule inner protein 2A (319 aa).

It belongs to the CIMIP2 family. In terms of assembly, microtubule inner protein component of sperm flagellar doublet microtubules.

It localises to the cytoplasm. Its subcellular location is the cytoskeleton. It is found in the flagellum axoneme. Microtubule inner protein (MIP) part of the dynein-decorated doublet microtubules (DMTs) in flagellum axoneme. Binds to the intra-tubulin interfaces. The protein is Ciliary microtubule inner protein 2A (Cimip2a) of Mus musculus (Mouse).